We begin with the raw amino-acid sequence, 230 residues long: Ribose-5-phosphate isomerase A (230 aa).

Substrate contacts are provided by residues 29 to 32, 85 to 88, and 98 to 101; these read TGST, DGAD, and KGGG. The active-site Proton acceptor is the Glu107. Substrate is bound at residue Lys125.

Belongs to the ribose 5-phosphate isomerase family. In terms of assembly, homodimer.

It catalyses the reaction aldehydo-D-ribose 5-phosphate = D-ribulose 5-phosphate. It functions in the pathway carbohydrate degradation; pentose phosphate pathway; D-ribose 5-phosphate from D-ribulose 5-phosphate (non-oxidative stage): step 1/1. Catalyzes the reversible conversion of ribose-5-phosphate to ribulose 5-phosphate. This chain is Ribose-5-phosphate isomerase A, found in Staphylococcus epidermidis (strain ATCC 35984 / DSM 28319 / BCRC 17069 / CCUG 31568 / BM 3577 / RP62A).